The sequence spans 716 residues: Lamin-like protein (716 aa).

Composition is skewed to basic residues over residues 1–10 (MDMSKKKSKR) and 35–45 (KKTKTTTKKKA). Residues 1–107 (MDMSKKKSKR…TIQSIPTTPI (107 aa)) are disordered. Residues 62–107 (ITTTTTSTSTTNNNNITTTSTSSQQSNGTLSSSSSPTIQSIPTTPI) are compositionally biased toward low complexity. A coiled-coil region spans residues 130–450 (LREKDELSLI…KMRKQMADLK (321 aa)). Residues 132 to 515 (EKDELSLIHN…ELVKGFEKTV (384 aa)) form the IF rod domain. The short motif at 519 to 522 (KRKR) is the Nuclear localization signal element. The segment at 519 to 584 (KRKRSKLQHE…PTGPEQSELF (66 aa)) is disordered. A compositionally biased stretch (polar residues) spans 532 to 545 (AANQDQNGMTIEEQ). Over residues 546 to 564 (SSTSTTTTTSATGSSSSTS) the composition is skewed to low complexity. Residues 565–584 (HLDNIDSSKLPTGPEQSELF) are compositionally biased toward polar residues. The LTD domain occupies 575–698 (PTGPEQSELF…EETTTVTLPA (124 aa)). Positions 713–716 (CLIM) match the CAAX motif motif.

The protein belongs to the intermediate filament family. In terms of assembly, homodimer. Lamin dimers then assemble into dimeric head-to-tail polymers. Ultimately, two head-to-tail polymers assemble laterally into a protofilament with a uniformly shaped rod of 3.5 nm in diameter.

The protein resides in the nucleus lamina. Its subcellular location is the nucleus envelope. The protein localises to the nucleus inner membrane. Its function is as follows. Lamins are intermediate filament proteins that assemble into a filamentous meshwork, and which constitute the major components of the nuclear lamina, a fibrous layer on the nucleoplasmic side of the inner nuclear membrane. Lamins provide a framework for the nuclear envelope, bridging the nuclear envelope and chromatin, thereby playing an important role in nuclear assembly, chromatin organization, nuclear membrane and telomere dynamics. The structural integrity of the lamina is strictly controlled by the cell cycle, as seen by the disintegration and formation of the nuclear envelope in prophase and telophase, respectively. Helps to maintain integrity of nuclear structures in response to mechanical stress. This chain is Lamin-like protein, found in Dictyostelium discoideum (Social amoeba).